A 486-amino-acid chain; its full sequence is Glutamyl-tRNA(Gln) amidotransferase subunit A (486 aa).

Residues K76 and S151 each act as charge relay system in the active site. S175 (acyl-ester intermediate) is an active-site residue.

The protein belongs to the amidase family. GatA subfamily. In terms of assembly, heterotrimer of A, B and C subunits.

The enzyme catalyses L-glutamyl-tRNA(Gln) + L-glutamine + ATP + H2O = L-glutaminyl-tRNA(Gln) + L-glutamate + ADP + phosphate + H(+). Allows the formation of correctly charged Gln-tRNA(Gln) through the transamidation of misacylated Glu-tRNA(Gln) in organisms which lack glutaminyl-tRNA synthetase. The reaction takes place in the presence of glutamine and ATP through an activated gamma-phospho-Glu-tRNA(Gln). In Nitrosomonas europaea (strain ATCC 19718 / CIP 103999 / KCTC 2705 / NBRC 14298), this protein is Glutamyl-tRNA(Gln) amidotransferase subunit A.